Consider the following 463-residue polypeptide: Type IV secretion system protein PtlD homolog (463 aa).

Positions 1 to 24 (MAGLSRILLSCTLACLLAGQAAQA) are cleaved as a signal peptide. 5 consecutive transmembrane segments (helical) span residues 118–138 (LQPLVYSMMTLLVLLTGYALL), 232–252 (WLLCAMIVATSAGGWLCLAAS), 253–273 (LLIVPGLIVTLLLSLGPLFLV), 294–314 (ALVFMALGTPAVGLLSDVLAG), and 333–353 (MLAATLCATATLMLLTLVPLA). The span at 376–410 (AHRQAAARQYAPRPAAAAAAAGPHQAGTYAASATP) shows a compositional bias: low complexity. The tract at residues 376–463 (AHRQAAARQY…RVLPRKPNLP (88 aa)) is disordered. Over residues 411–420 (APAPARPAPS) the composition is skewed to pro residues. The span at 441-455 (VRRDDRPAPAPDRRV) shows a compositional bias: basic and acidic residues.

It is found in the cell membrane. This chain is Type IV secretion system protein PtlD homolog (ptlD), found in Bordetella parapertussis (strain 12822 / ATCC BAA-587 / NCTC 13253).